The chain runs to 320 residues: Homoserine kinase (320 aa).

Proline 100–alanine 110 lines the ATP pocket.

This sequence belongs to the GHMP kinase family. Homoserine kinase subfamily.

The protein resides in the cytoplasm. The enzyme catalyses L-homoserine + ATP = O-phospho-L-homoserine + ADP + H(+). The protein operates within amino-acid biosynthesis; L-threonine biosynthesis; L-threonine from L-aspartate: step 4/5. Functionally, catalyzes the ATP-dependent phosphorylation of L-homoserine to L-homoserine phosphate. The polypeptide is Homoserine kinase (Chlorobium phaeobacteroides (strain DSM 266 / SMG 266 / 2430)).